A 529-amino-acid polypeptide reads, in one-letter code: Bifunctional purine biosynthesis protein PurH (529 aa).

The 148-residue stretch at 1-148 (MQQPRPIRRA…KNHKDVAIVV (148 aa)) folds into the MGS-like domain.

This sequence belongs to the PurH family.

The catalysed reaction is (6R)-10-formyltetrahydrofolate + 5-amino-1-(5-phospho-beta-D-ribosyl)imidazole-4-carboxamide = 5-formamido-1-(5-phospho-D-ribosyl)imidazole-4-carboxamide + (6S)-5,6,7,8-tetrahydrofolate. It carries out the reaction IMP + H2O = 5-formamido-1-(5-phospho-D-ribosyl)imidazole-4-carboxamide. It participates in purine metabolism; IMP biosynthesis via de novo pathway; 5-formamido-1-(5-phospho-D-ribosyl)imidazole-4-carboxamide from 5-amino-1-(5-phospho-D-ribosyl)imidazole-4-carboxamide (10-formyl THF route): step 1/1. Its pathway is purine metabolism; IMP biosynthesis via de novo pathway; IMP from 5-formamido-1-(5-phospho-D-ribosyl)imidazole-4-carboxamide: step 1/1. This is Bifunctional purine biosynthesis protein PurH from Serratia proteamaculans (strain 568).